A 234-amino-acid chain; its full sequence is MNHLPEDMENALTGSQSSHASLRNIHSINPTQLMARIESYEGREKKGISDVRRTFCLFVTFDLLFVTLLWIIELNVNGGIENTLEKEVMQYDYYSSYFDIFLLAVFRFKVLILAYAVCRLRHWWAIALTTAVTSAFLLAKVILSKLFSQGAFGYVLPIISFILAWIETWFLDFKVLPQEAEEENRLLIVQDASERAALIPGGLSDGQFYSPPESEAGSEEAEEKQDSEKPLLEL.

Position 1 is an N-acetylmethionine (Met1). Residues 1-53 (MNHLPEDMENALTGSQSSHASLRNIHSINPTQLMARIESYEGREKKGISDVRR) lie on the Cytoplasmic side of the membrane. Ser15, Ser21, and Ser27 each carry phosphoserine. The region spanning 48–218 (ISDVRRTFCL…YSPPESEAGS (171 aa)) is the MENTAL domain. The chain crosses the membrane as a helical span at residues 54 to 74 (TFCLFVTFDLLFVTLLWIIEL). Residues 75-97 (NVNGGIENTLEKEVMQYDYYSSY) lie on the Extracellular side of the membrane. The chain crosses the membrane as a helical span at residues 98–118 (FDIFLLAVFRFKVLILAYAVC). At 119–122 (RLRH) the chain is on the cytoplasmic side. A helical transmembrane segment spans residues 123-143 (WWAIALTTAVTSAFLLAKVIL). Residues 144–150 (SKLFSQG) lie on the Extracellular side of the membrane. Residues 151–171 (AFGYVLPIISFILAWIETWFL) form a helical membrane-spanning segment. The Cytoplasmic segment spans residues 172-234 (DFKVLPQEAE…QDSEKPLLEL (63 aa)). Ser193 is modified (phosphoserine). The interval 200–234 (PGGLSDGQFYSPPESEAGSEEAEEKQDSEKPLLEL) is disordered. Positions 208 to 213 (FYSPPE) match the FFAT motif. Residues 224-234 (KQDSEKPLLEL) are compositionally biased toward basic and acidic residues.

It belongs to the STARD3 family. In terms of assembly, homodimer. Interacts (via the MENTAL domain) with STARD3NL. Interacts (via FFAT motif) with VAPA. Interacts (via FFAT motif) with VAPB. Interacts (via FFAT motif) with MOSPD2 (via MSP domain).

The protein localises to the late endosome membrane. Tethering protein that creates contact site between the endoplasmic reticulum and late endosomes: localizes to late endosome membranes and contacts the endoplasmic reticulum via interaction with VAPA and VAPB. This Homo sapiens (Human) protein is STARD3 N-terminal-like protein.